The primary structure comprises 161 residues: Large ribosomal subunit protein uL30m (161 aa).

A mitochondrion-targeting transit peptide spans 1 to 34 (MAGILRLVVQRPPGGLQTVTKGVESLIGTDWIRH).

It belongs to the universal ribosomal protein uL30 family. Component of the mitochondrial ribosome large subunit (39S) which comprises a 16S rRNA and about 50 distinct proteins.

It localises to the mitochondrion. The polypeptide is Large ribosomal subunit protein uL30m (MRPL30) (Macaca fascicularis (Crab-eating macaque)).